Consider the following 475-residue polypeptide: Chromosomal replication initiator protein DnaA (475 aa).

The segment at 1–71 is domain I, interacts with DnaA modulators; it reads MTNDTWNEVR…RQLSAHGAGA (71 aa). The tract at residues 71–133 is domain II; it reads ADRVKFTVSP…PAQPRELPGA (63 aa). The segment covering 107–127 has biased composition (low complexity); the sequence is APAPVHHTAPAPAPVAAPAQP. The segment at 107 to 129 is disordered; that stretch reads APAPVHHTAPAPAPVAAPAQPRE. The segment at 134-355 is domain III, AAA+ region; the sequence is KLNPNFTFAN…GALTRLFAFA (222 aa). ATP contacts are provided by Gly178, Gly180, Lys181, and Thr182. The tract at residues 356–475 is domain IV, binds dsDNA; that stretch reads DLVRREVTVD…AELLRRTLEA (120 aa).

This sequence belongs to the DnaA family. In terms of assembly, oligomerizes as a right-handed, spiral filament on DNA at oriC.

The protein localises to the cytoplasm. Functionally, plays an essential role in the initiation and regulation of chromosomal replication. ATP-DnaA binds to the origin of replication (oriC) to initiate formation of the DNA replication initiation complex once per cell cycle. Binds the DnaA box (a 9 base pair repeat at the origin) and separates the double-stranded (ds)DNA. Forms a right-handed helical filament on oriC DNA; dsDNA binds to the exterior of the filament while single-stranded (ss)DNA is stabiized in the filament's interior. The ATP-DnaA-oriC complex binds and stabilizes one strand of the AT-rich DNA unwinding element (DUE), permitting loading of DNA polymerase. After initiation quickly degrades to an ADP-DnaA complex that is not apt for DNA replication. Binds acidic phospholipids. The sequence is that of Chromosomal replication initiator protein DnaA from Jannaschia sp. (strain CCS1).